Here is a 504-residue protein sequence, read N- to C-terminus: Protein Dok-7 (504 aa).

Residues 4-109 (AALVEGQVKL…WDTRIRYALG (106 aa)) form the PH domain. In terms of domain architecture, IRS-type PTB spans 105–210 (RYALGEVHRF…RGISPTKGPF (106 aa)). 3 disordered regions span residues 210–232 (FGLR…ERVA), 248–348 (LSHS…HSSY), and 371–483 (SLLS…PHAG). Low complexity predominate over residues 263 to 280 (LSSSSSEASHSDISASSR). Composition is skewed to polar residues over residues 285–297 (PEQS…TSQE), 331–341 (GRQSSSDSGIA), and 421–430 (PASQGSSDHG).

Homodimer. Forms a heterotetramer composed of 2 DOK7 and 2 MUSK molecules which facilitates MUSK trans-autophosphorylation on tyrosine residue and activation. Interacts (via IRS-type PTB domain) with MUSK (via cytoplasmic part); requires MUSK phosphorylation.

It localises to the cell membrane. The protein localises to the synapse. Functionally, probable muscle-intrinsic activator of MUSK that plays an essential role in neuromuscular synaptogenesis. Acts in aneural activation of MUSK and subsequent acetylcholine receptor (AchR) clustering in myotubes. Induces autophosphorylation of MUSK. The protein is Protein Dok-7 (Dok7) of Mus musculus (Mouse).